Reading from the N-terminus, the 156-residue chain is Small ribosomal subunit protein uS7 (156 aa).

Belongs to the universal ribosomal protein uS7 family. In terms of assembly, part of the 30S ribosomal subunit. Contacts proteins S9 and S11.

One of the primary rRNA binding proteins, it binds directly to 16S rRNA where it nucleates assembly of the head domain of the 30S subunit. Is located at the subunit interface close to the decoding center, probably blocks exit of the E-site tRNA. The sequence is that of Small ribosomal subunit protein uS7 from Thermobifida fusca (strain YX).